We begin with the raw amino-acid sequence, 235 residues long: Small ribosomal subunit protein uS3 (235 aa).

Residues Val-39 to Lys-107 form the KH type-2 domain. Over residues Ala-215–Lys-226 the composition is skewed to low complexity. The tract at residues Ala-215 to Lys-235 is disordered.

It belongs to the universal ribosomal protein uS3 family. In terms of assembly, part of the 30S ribosomal subunit. Forms a tight complex with proteins S10 and S14.

Binds the lower part of the 30S subunit head. Binds mRNA in the 70S ribosome, positioning it for translation. The polypeptide is Small ribosomal subunit protein uS3 (Histophilus somni (strain 129Pt) (Haemophilus somnus)).